We begin with the raw amino-acid sequence, 281 residues long: Non-selective voltage-gated ion channel 2 (281 aa).

Residues R11 and R19 each coordinate ATP.

It belongs to the eukaryotic mitochondrial porin family.

Its subcellular location is the mitochondrion outer membrane. In terms of biological role, non-selective voltage-gated ion channel that mediates the transport of anions and cations through the mitochondrion outer membrane. The channel adopts an open conformation at low or zero membrane potential and a closed conformation at potentials above 30-40 mV. The open state has a weak anion selectivity whereas the closed state is cation-selective. Does not confer permeability to NADH. Its function is as follows. Catalyzes the scrambling of phospholipids across the outer mitochondrial membrane; the mechanism is unrelated to channel activity and is capable of translocating both anionic and zwitterionic phospholipids. The sequence is that of Non-selective voltage-gated ion channel 2 (POR2) from Saccharomyces cerevisiae (strain ATCC 204508 / S288c) (Baker's yeast).